A 494-amino-acid chain; its full sequence is NAD(+) hydrolase ThsA (494 aa).

Residues 11–295 (ATDKEVLIKE…TILQRYCRSK (285 aa)) enclose the Deacetylase sirtuin-type domain. Ala-30, Asp-119, and His-157 together coordinate NAD(+). The active-site Proton acceptor is the His-157. The SLOG (STALD) domain, binds 3'cADPR stretch occupies residues 296–494 (ILISGSAVEY…KIITALRAGR (199 aa)). 3'cADPR-binding residues include Gly-300, Ser-301, Leu-339, Phe-370, Arg-388, Lys-405, Gly-416, and Glu-420.

It belongs to the soluble Thoeris ThsA family. In terms of assembly, homotetramer.

It localises to the cytoplasm. It catalyses the reaction NAD(+) + H2O = ADP-D-ribose + nicotinamide + H(+). With respect to regulation, probably activated by a signal molecule generated by endogenous ThsB1 and/or ThsB2. Can also be activated by the signal generated by ThsB of B.cereus. The activating molecule might be 3' cyclic ADP-D-ribose (3'cADPR). Functionally, probable NAD(+) hydrolyzing component (NADase) of the Thoeris antiviral defense system, composed of ThsA, TIR1 (thsB1) and TIR2 (thsB2). Activated by a signal molecule generated by endogenous TIR1, TIR2 or ThsB from B.cereus. After activation it binds and hydrolyzes NAD(+), leading to cell death and inhibition of phage replication. Expression of Thoeris in B.subtilis (strain BEST7003) confers resistance to phages phi29, phi3T, SPBeta, SBSphi11, SBSphi13, SBSphiJ, SPO1 and SPR but not SBSphiC. The TIR paralogs confer overlapping resistance to different phages. In Cytobacillus dafuensis (Bacillus dafuensis), this protein is NAD(+) hydrolase ThsA.